Here is a 415-residue protein sequence, read N- to C-terminus: Neuromedin-U receptor 2 (415 aa).

Residues Met1–Ser49 lie on the Extracellular side of the membrane. 2 N-linked (GlcNAc...) asparagine glycosylation sites follow: Asn9 and Asn27. Residues Val50–Ile70 traverse the membrane as a helical segment. The Cytoplasmic segment spans residues Leu71–Tyr82. The chain crosses the membrane as a helical span at residues Tyr83–Val103. Topologically, residues Tyr104 to Thr123 are extracellular. Cys119 and Cys204 form a disulfide bridge. The helical transmembrane segment at Ala124–Val146 threads the bilayer. Residues Ala147–Arg165 are Cytoplasmic-facing. Residues Ile166–Gly186 traverse the membrane as a helical segment. At Ile187–Asn214 the chain is on the extracellular side. A glycan (N-linked (GlcNAc...) asparagine) is linked at Asn194. Residues Phe215–Leu235 form a helical membrane-spanning segment. Residues Tyr236 to Ser265 are Cytoplasmic-facing. A helical transmembrane segment spans residues Val266 to Ile286. Topologically, residues Asp287–Leu301 are extracellular. A helical membrane pass occupies residues Ala302–Val322. Residues Asn323–Thr415 are Cytoplasmic-facing.

The protein belongs to the G-protein coupled receptor 1 family. In terms of tissue distribution, predominantly expressed in the CNS, particularly in the medulla oblongata, pontine reticular formation, spinal cord, and thalamus. High level in testis whereas lower levels are present in a variety of peripheral tissues including the gastrointestinal tract, genitourinary tract, liver, pancreas, adrenal gland, thyroid gland, lung, trachea, spleen and thymus.

It localises to the cell membrane. Its function is as follows. Receptor for the neuromedin-U and neuromedin-S neuropeptides. The sequence is that of Neuromedin-U receptor 2 (NMUR2) from Homo sapiens (Human).